The following is a 380-amino-acid chain: Tryptophan 2,3-dioxygenase (380 aa).

Substrate-binding positions include 57–61 (FIITH) and Arg128. Residue His313 coordinates heme. Thr328 serves as a coordination point for substrate.

It belongs to the tryptophan 2,3-dioxygenase family. As to quaternary structure, homotetramer. Dimer of dimers. Heme is required as a cofactor.

The enzyme catalyses L-tryptophan + O2 = N-formyl-L-kynurenine. Its pathway is amino-acid degradation; L-tryptophan degradation via kynurenine pathway; L-kynurenine from L-tryptophan: step 1/2. It functions in the pathway pigment biosynthesis; ommochrome biosynthesis. In terms of biological role, heme-dependent dioxygenase that catalyzes the oxidative cleavage of the L-tryptophan (L-Trp) pyrrole ring and converts L-tryptophan to N-formyl-L-kynurenine. Catalyzes the oxidative cleavage of the indole moiety. This is Tryptophan 2,3-dioxygenase from Drosophila persimilis (Fruit fly).